A 274-amino-acid chain; its full sequence is MLLAIDVRNTHTVVGLLSGSKEHAKVVQQWRIRTESEVTADELALIIDGLIGDDSERLAGAAALSTVPSVLHEVRIMLDQYWPSVPHVLIEPGVRTGIPLLVDNPKEVGADRIVNCLAAFHKFGQAAIVVDFGSSICVDVVSAKGEFLGGAIAPGVQVSSDAAAARSAALRRVELARPRSVVGKNTVECMQAGVVFGFAGLVDGLVGRMRQDVEEFSGDLGNRVAVVATGHTAPLLLPELHTVDHYDRHLTLHGLRLVFERNREAQRGRLKTAR.

ATP is bound at residue 6–13 (DVRNTHTV). Position 109–112 (109–112 (GADR)) interacts with substrate. Catalysis depends on aspartate 111, which acts as the Proton acceptor. Aspartate 131 contacts K(+). Serine 134 contributes to the ATP binding site. Threonine 186 is a substrate binding site.

The protein belongs to the type III pantothenate kinase family. Homodimer. It depends on NH4(+) as a cofactor. K(+) serves as cofactor.

It is found in the cytoplasm. It catalyses the reaction (R)-pantothenate + ATP = (R)-4'-phosphopantothenate + ADP + H(+). The protein operates within cofactor biosynthesis; coenzyme A biosynthesis; CoA from (R)-pantothenate: step 1/5. Functionally, catalyzes the phosphorylation of pantothenate (Pan), the first step in CoA biosynthesis. The sequence is that of Type III pantothenate kinase from Mycobacterium leprae (strain Br4923).